A 290-amino-acid polypeptide reads, in one-letter code: Bifunctional protein FolD (290 aa).

Residues 174-176 (GHS), isoleucine 199, and isoleucine 240 contribute to the NADP(+) site.

This sequence belongs to the tetrahydrofolate dehydrogenase/cyclohydrolase family. Homodimer.

The enzyme catalyses (6R)-5,10-methylene-5,6,7,8-tetrahydrofolate + NADP(+) = (6R)-5,10-methenyltetrahydrofolate + NADPH. It carries out the reaction (6R)-5,10-methenyltetrahydrofolate + H2O = (6R)-10-formyltetrahydrofolate + H(+). It participates in one-carbon metabolism; tetrahydrofolate interconversion. In terms of biological role, catalyzes the oxidation of 5,10-methylenetetrahydrofolate to 5,10-methenyltetrahydrofolate and then the hydrolysis of 5,10-methenyltetrahydrofolate to 10-formyltetrahydrofolate. This Methanosarcina acetivorans (strain ATCC 35395 / DSM 2834 / JCM 12185 / C2A) protein is Bifunctional protein FolD.